The following is a 261-amino-acid chain: tRNA pseudouridine synthase A (261 aa).

The Nucleophile role is filled by Asp-51. Tyr-109 is a binding site for substrate.

It belongs to the tRNA pseudouridine synthase TruA family. As to quaternary structure, homodimer.

The catalysed reaction is uridine(38/39/40) in tRNA = pseudouridine(38/39/40) in tRNA. In terms of biological role, formation of pseudouridine at positions 38, 39 and 40 in the anticodon stem and loop of transfer RNAs. The polypeptide is tRNA pseudouridine synthase A (Shewanella sp. (strain MR-4)).